Reading from the N-terminus, the 2376-residue chain is Reducing polyketide synthase DEP5 (2376 aa).

The Ketosynthase family 3 (KS3) domain occupies 47 to 477; the sequence is LEPIAVVGMG…GTNAHTIIES (431 aa). Residues C221, H358, and H399 each act as for beta-ketoacyl synthase activity in the active site. A malonyl-CoA:ACP transacylase (MAT) domain region spans residues 593-906; that stretch reads VFTGQGAQWA…QYLPTLVRGF (314 aa). S685 serves as the catalytic For malonyltransferase activity. Positions 983–1121 are N-terminal hotdog fold; that stretch reads HDVLGQLTTG…GSIAIRTSAR (139 aa). Residues 983-1158 are dehydratase (DH) domain; sequence HDVLGQLTTG…FNYGPTFQDM (176 aa). Residues 983 to 1286 form the PKS/mFAS DH domain; it reads HDVLGQLTTG…CIAYEAAIPQ (304 aa). The Proton acceptor; for dehydratase activity role is filled by H1015. The C-terminal hotdog fold stretch occupies residues 1131–1286; that stretch reads LPQRASGRLW…CIAYEAAIPQ (156 aa). D1195 (proton donor; for dehydratase activity) is an active-site residue. The tract at residues 1659–1964 is enoyl reductase (ER) domain; sequence GRIQAGKVVF…DSICDNKIVI (306 aa). Residues 1988–2163 form a ketoreductase (KR) domain region; the sequence is ATYLLVGCLG…KPACAVVLPM (176 aa). Residues 2289 to 2368 form the Carrier domain; the sequence is DLVRDHFIAK…KFSELVCGAQ (80 aa). S2327 bears the O-(pantetheine 4'-phosphoryl)serine mark.

The protein operates within polyketide biosynthesis. Functionally, reducing polyketide synthase; part of the gene cluster that mediates the biosynthesis of depudecin, a highly oxidized eleven-carbon linear polyketide that acts as a histone deacetylase (HDAC) inhibitor and makes a small contribution to pathogenesis. The reducing polyketide synthase DEP5 is the central enzyme in depudecin biosynthesis by yielding the backbone polyketide chain. The monooxygenases DEP2 and DEP4, as well as the uncharacterized protein DEP1, then act as tailoring enzymes to modify the intermediate polyketide chain into depudecin. The chain is Reducing polyketide synthase DEP5 from Alternaria brassicicola (Dark leaf spot agent).